The primary structure comprises 973 residues: Translation initiation factor IF-2 (973 aa).

The segment covering 97–135 has biased composition (basic and acidic residues); it reads GHIDLDGGQHKKQQEEPKAKEEPKVKEEPKVKEEPKVKE. 2 disordered regions span residues 97 to 343 and 353 to 372; these read GHID…EDVQ and LTNK…DKRD. The segment covering 136 to 155 has biased composition (low complexity); sequence APAAPAAQAPVKPAQPAQAP. Composition is skewed to basic and acidic residues over residues 156–175, 183–204, 212–224, and 237–250; these read TEKK…KTVE, PKVE…DDNL, LESK…KIDL, and TKEE…EKQK. The segment covering 252-266 has biased composition (low complexity); that stretch reads NNNRPGNNSNGPGAP. 2 stretches are compositionally biased toward basic and acidic residues: residues 315–326 and 333–343; these read PNRDDRPNNDRK and VKAEVSEEDVQ. The region spanning 472–642 is the tr-type G domain; it reads ARPPIVTVMG…LLEADLLDLK (171 aa). The tract at residues 481-488 is G1; that stretch reads GHVDHGKT. Residue 481–488 participates in GTP binding; it reads GHVDHGKT. Residues 506 to 510 are G2; sequence GITQH. Residues 528–531 form a G3 region; sequence DTPG. GTP is bound by residues 528–532 and 582–585; these read DTPGH and NKID. Residues 582 to 585 are G4; sequence NKID. Residues 618–620 are G5; that stretch reads SAK.

This sequence belongs to the TRAFAC class translation factor GTPase superfamily. Classic translation factor GTPase family. IF-2 subfamily.

Its subcellular location is the cytoplasm. One of the essential components for the initiation of protein synthesis. Protects formylmethionyl-tRNA from spontaneous hydrolysis and promotes its binding to the 30S ribosomal subunits. Also involved in the hydrolysis of GTP during the formation of the 70S ribosomal complex. This chain is Translation initiation factor IF-2, found in Parabacteroides distasonis (strain ATCC 8503 / DSM 20701 / CIP 104284 / JCM 5825 / NCTC 11152).